Here is a 280-residue protein sequence, read N- to C-terminus: Delta(3,5)-Delta(2,4)-dienoyl-CoA isomerase (280 aa).

Glu-154 functions as the Proton donor/acceptor in the catalytic mechanism. A Peroxisome targeting signal (PTS1) motif is present at residues 278-280 (HKL).

Belongs to the enoyl-CoA hydratase/isomerase family.

It localises to the cytoplasm. Its subcellular location is the cytosol. It is found in the peroxisome. The catalysed reaction is a (3E,5Z)-dienoyl-CoA = a (2E,4E)-(5,6-saturated)-dienoyl-CoA. It participates in lipid metabolism; fatty acid beta-oxidation. Functionally, peroxisomal di-isomerase that is involved in fatty acid metabolism enzyme by converting 3,5-dienoyl-CoAs to the corresponding 2,4-dienoyl-CoAs. Involved in fatty acid beta-oxidation, which is important for lipid droplets degradation and infectious growth. The protein is Delta(3,5)-Delta(2,4)-dienoyl-CoA isomerase of Pyricularia oryzae (strain 70-15 / ATCC MYA-4617 / FGSC 8958) (Rice blast fungus).